We begin with the raw amino-acid sequence, 107 residues long: Nucleoid-associated protein BMEA_A0033 (107 aa).

The protein belongs to the YbaB/EbfC family. As to quaternary structure, homodimer.

It localises to the cytoplasm. It is found in the nucleoid. In terms of biological role, binds to DNA and alters its conformation. May be involved in regulation of gene expression, nucleoid organization and DNA protection. The chain is Nucleoid-associated protein BMEA_A0033 from Brucella melitensis biotype 2 (strain ATCC 23457).